A 372-amino-acid chain; its full sequence is Probable dual-specificity RNA methyltransferase RlmN (372 aa).

The Proton acceptor role is filled by E106. One can recognise a Radical SAM core domain in the interval 112–359; that stretch reads YPQRNTVCIS…SCTVRDTRGR (248 aa). C119 and C365 are disulfide-bonded. [4Fe-4S] cluster contacts are provided by C126, C130, and C133. S-adenosyl-L-methionine is bound by residues 186–187, S220, 243–245, and N322; these read GE and SLH. C365 functions as the S-methylcysteine intermediate in the catalytic mechanism.

Belongs to the radical SAM superfamily. RlmN family. [4Fe-4S] cluster serves as cofactor.

The protein localises to the cytoplasm. It catalyses the reaction adenosine(2503) in 23S rRNA + 2 reduced [2Fe-2S]-[ferredoxin] + 2 S-adenosyl-L-methionine = 2-methyladenosine(2503) in 23S rRNA + 5'-deoxyadenosine + L-methionine + 2 oxidized [2Fe-2S]-[ferredoxin] + S-adenosyl-L-homocysteine. It carries out the reaction adenosine(37) in tRNA + 2 reduced [2Fe-2S]-[ferredoxin] + 2 S-adenosyl-L-methionine = 2-methyladenosine(37) in tRNA + 5'-deoxyadenosine + L-methionine + 2 oxidized [2Fe-2S]-[ferredoxin] + S-adenosyl-L-homocysteine. Functionally, specifically methylates position 2 of adenine 2503 in 23S rRNA and position 2 of adenine 37 in tRNAs. The chain is Probable dual-specificity RNA methyltransferase RlmN from Mycolicibacterium smegmatis (strain ATCC 700084 / mc(2)155) (Mycobacterium smegmatis).